Consider the following 144-residue polypeptide: HTH-type transcriptional regulator BilQ (144 aa).

An HTH marR-type domain is found at 1-134 (MEQTFAYYTT…LFTLLQKLGK (134 aa)). The segment at residues 48-71 (QRELAAAVRADEGYAARSVEKLLQ) is a DNA-binding region (H-T-H motif).

Its function is as follows. Transcription regulator that regulates expression of the bilirubin reductase operon (bilQ, bilR and bilS). This is HTH-type transcriptional regulator BilQ from Clostridium symbiosum (strain WAL-14163).